An 86-amino-acid polypeptide reads, in one-letter code: Tryptophan-containing weak neurotoxin (86 aa).

A signal peptide spans 1-21; the sequence is MKTLLLTLVVVTIVCLDLGYT. Intrachain disulfides connect Cys24–Cys45, Cys27–Cys32, Cys38–Cys63, Cys67–Cys78, and Cys79–Cys84.

The protein belongs to the three-finger toxin family. Ancestral subfamily. Orphan group II sub-subfamily. In terms of assembly, monomer in solution. Post-translationally, the disulfide bond Cys-27-Cys-32 is probably not needed for efficient interaction of the toxin with the target receptor (Torpedo muscle or alpha-7/CHRNA7 nAChR). As to expression, expressed by the venom gland.

Its subcellular location is the secreted. Its function is as follows. Neurotoxin that irreversibly inhibits nicotinic acetylcholine receptors (nAChR) and allosterically interacts with muscarinic acetylcholine receptors (mAChR). The loop II is involved in the interaction of this toxin with nAChR and mAChR. On nAChR, it acts as a competitive antagonist (muscle-type and alpha-7/CHRNA7) with IC(50) values in the micromolar range. On mAChR, in presence of ACh, it partially inhibits the effect of acetylcholine (ACh) (allosteric antagonist), whereas in the absence of ACh, it activates the receptor (allosteric agonist). It also shows a very weak inhibition of GABA(A) receptor composed of alpha-1-beta-3-gamma-2 (GABRA1 and GABRB3 and GABRG2) subunits (10 uM inhibit 31% current). In vivo, is nonlethal to mice at concentrations up to 20 mg/kg, but exerts a myorelaxant effect, induces a dose-dependent decrease in blood pressure and an increase in heart rate in mice and rats. In Naja kaouthia (Monocled cobra), this protein is Tryptophan-containing weak neurotoxin.